A 232-amino-acid polypeptide reads, in one-letter code: PsbP domain-containing protein 2, chloroplastic (232 aa).

The N-terminal 34 residues, 1–34, are a transit peptide targeting the chloroplast; the sequence is MWSQSFLGSAPKLCLFSSSLPPFSHHKIHKFFCF. Residues 35 to 71 constitute a thylakoid transit peptide; it reads AQNPSSTVSINLSKRHLNLSILTLFFNGFLLDNKAKS.

This sequence belongs to the PsbP family.

It is found in the plastid. It localises to the chloroplast thylakoid lumen. This chain is PsbP domain-containing protein 2, chloroplastic (PPD2), found in Arabidopsis thaliana (Mouse-ear cress).